Reading from the N-terminus, the 815-residue chain is MEGPRSDVGRWGRSPWQPPTTPSPEPEPEPEPDRRSRSRRGGGRSFWARCCGCCSCGNRGDDDWGPEPSGSRSRGTSSRGRDSRGGRRPESRGSGVNAAGDGTIREGMLVVTGVDLLCSRSDQNRREHHTDEFEYDELIVRRGQPFHMILFLNREYESSDRIALELLIGSNPEVGKGTHVIIPVGKGGSGGWKAQVTKNNGHNLNLRVHTSPNAIIGKFQFTVRTRSEAGEFQLPFDPRNEIYILFNPWCPEDIVYVDHEDWRQEYVLNESGRIYYGTEAQIGERTWNYGQFDHGVLDACLYILDRRGMPYGGRGDPVSVSRVVSAMVNSLDDNGVLIGNWTGDYSRGTNPSAWVGSVEILLSYLRTGYSVPYGQCWVFAGVTTTVLRCLGFATRTVTNFNSAHDTDTSLTMDIYFDENMKPLEHLNHDSVWNFHVWNDCWMKRPDLPSGFDGWQVVDATPQETSSGIFCCGPCSVESVKNGLVYMKYDTPFIFAEVNSDKVYWQRQDDGSFKIVYVEEKAIGTLIVTKAIHSNNREDITHIYKHPEGSEAERRAVEKAAAHGSKPNVYATRDSAEDVAMQVEAQDAVMGQDLAVSVVLTNRGSSRRTVKLHLYLCVTYYTGVSGPTFKEAKKEVTLAPGASDSVTMPVAYKEYKPHLVDQGAMLLNVSGHVKESGQVLAKQHTFRLRTPDLSLTLLGAAVVGQECGVQIVFKNPLPVTLTNVVFRLEGSGLQRPKVLNVGDIGGNETVTLRQTFVPVRPGPRQLIASLDSPQLSQVHGVIQVDVAPASGGSGFSDAGGDSRSGENIPMAYRGGA.

Positions 1 to 10 are enriched in basic and acidic residues; sequence MEGPRSDVGR. Disordered regions lie at residues 1–48 and 62–101; these read MEGP…SFWA and DDWG…AAGD. Pro residues predominate over residues 16 to 25; the sequence is WQPPTTPSPE. A Phosphothreonine modification is found at T21. 5 positions are modified to phosphoserine: S23, S71, S83, S91, and S94. Positions 66 to 78 are enriched in low complexity; that stretch reads PEPSGSRSRGTSS. Basic and acidic residues predominate over residues 79–91; the sequence is RGRDSRGGRRPES. Catalysis depends on residues C376, H435, and D458. Ca(2+) contacts are provided by N498, D500, E547, and E552. The disordered stretch occupies residues 791–815; that stretch reads GSGFSDAGGDSRSGENIPMAYRGGA. S803 bears the Phosphoserine mark.

The protein belongs to the transglutaminase superfamily. Transglutaminase family. As to quaternary structure, interacts with PLAAT4. The cofactor is Ca(2+). Tyrosine-phosphorylated. In terms of processing, palmitoylated. Post-translationally, the membrane anchorage region possesses a cluster of five cysteines within which fatty acid(s) may become thioester-linked. It is subject to phorbol ester-stimulated phosphorylation and is hypersensitive to proteolysis, which releases the enzyme in a soluble form. In terms of tissue distribution, expressed in large amounts in epithelial tissues (lung, liver and kidney).

The protein localises to the membrane. It carries out the reaction L-glutaminyl-[protein] + L-lysyl-[protein] = [protein]-L-lysyl-N(6)-5-L-glutamyl-[protein] + NH4(+). In terms of biological role, catalyzes the cross-linking of proteins and the conjugation of polyamines to proteins. Responsible for cross-linking epidermal proteins during formation of the stratum corneum. Involved in cell proliferation. The sequence is that of Protein-glutamine gamma-glutamyltransferase K (Tgm1) from Mus musculus (Mouse).